Here is a 288-residue protein sequence, read N- to C-terminus: Small ribosomal subunit protein uS2 (288 aa).

The segment covering 259–276 has biased composition (low complexity); it reads EAAPAAEEAPAAEAEAAA. The interval 259–288 is disordered; that stretch reads EAAPAAEEAPAAEAEAAATDTSSESDKTEA.

It belongs to the universal ribosomal protein uS2 family.

This is Small ribosomal subunit protein uS2 from Maricaulis maris (strain MCS10) (Caulobacter maris).